Reading from the N-terminus, the 451-residue chain is Tubby-like F-box protein 12 (451 aa).

One can recognise an F-box domain in the interval 57 to 112; sequence SRWVGLPPELLRDVMKRLEEGESNWPSRKDVVACAAVCRTWREICKDIVQSPEICG. The segment covering 387 to 406 has biased composition (low complexity); the sequence is LEQQQQQQQQNHASSSSSAS. The disordered stretch occupies residues 387–407; it reads LEQQQQQQQQNHASSSSSASD.

Belongs to the TUB family. As to expression, ubiquitous.

This Oryza sativa subsp. japonica (Rice) protein is Tubby-like F-box protein 12 (TULP12).